We begin with the raw amino-acid sequence, 292 residues long: 11-beta-hydroxysteroid dehydrogenase 1 (292 aa).

Topologically, residues 1–7 (MAFMKKY) are cytoplasmic. Residues 8 to 24 (LLPILGIFLAYYYYSAN) traverse the membrane as a helical; Signal-anchor for type II membrane protein segment. At 25 to 292 (EEFRPEMLRG…KYNMERFINN (268 aa)) the chain is on the lumenal side. Residues 41–67 (GASK…TARS) and 92–93 (TM) each bind NADP(+). The N-linked (GlcNAc...) asparagine glycan is linked to Asn95. 119–121 (NHI) is a binding site for NADP(+). Substrate is bound at residue Ser170. Residue Tyr183 is the Proton acceptor of the active site. 183 to 187 (YSASK) provides a ligand contact to NADP(+). N-linked (GlcNAc...) asparagine glycosylation is present at Asn207. NADP(+) contacts are provided by residues 216–222 (GLIDTDT) and 218–222 (IDTDT).

This sequence belongs to the short-chain dehydrogenases/reductases (SDR) family. As to quaternary structure, homodimer. Liver, kidney, lung, hypothalamus, anterior pituitary and placenta.

The protein resides in the endoplasmic reticulum membrane. It catalyses the reaction an 11beta-hydroxysteroid + NADP(+) = an 11-oxosteroid + NADPH + H(+). The catalysed reaction is corticosterone + NADP(+) = 11-dehydrocorticosterone + NADPH + H(+). The enzyme catalyses cortisone + NADPH + H(+) = cortisol + NADP(+). It carries out the reaction a 7beta-hydroxysteroid + NADP(+) = a 7-oxosteroid + NADPH + H(+). It catalyses the reaction 7-oxocholesterol + NADPH + H(+) = 7beta-hydroxycholesterol + NADP(+). The catalysed reaction is chenodeoxycholate + NADP(+) = 7-oxolithocholate + NADPH + H(+). The enzyme catalyses 7-oxolithocholate + NADPH + H(+) = ursodeoxycholate + NADP(+). It carries out the reaction glycochenodeoxycholate + NADP(+) = 7-oxoglycolithocholate + NADPH + H(+). It catalyses the reaction taurochenodeoxycholate + NADP(+) = 7-oxotaurolithocholate + NADPH + H(+). The catalysed reaction is tauroursodeoxycholate + NADP(+) = 7-oxotaurolithocholate + NADPH + H(+). The enzyme catalyses glycoursodeoxycholate + NADP(+) = 7-oxoglycolithocholate + NADPH + H(+). It carries out the reaction 7-oxopregnenolone + NADPH + H(+) = 7beta-hydroxypregnenolone + NADP(+). It catalyses the reaction 3beta,7alpha-dihydroxyandrost-5-en-17-one + NADP(+) = 3beta-hydroxy-5-androstene-7,17-dione + NADPH + H(+). The catalysed reaction is 3beta-hydroxy-5-androstene-7,17-dione + NADPH + H(+) = 3beta,7beta-dihydroxyandrost-5-en-17-one + NADP(+). The enzyme catalyses 3beta-hydroxy-5alpha-androstane-7,17-dione + NADPH + H(+) = 3beta,7beta-dihydroxy-5alpha-androstan-17-one + NADP(+). Controls the reversible conversion of biologically active glucocorticoids such as cortisone to cortisol, and 11-dehydrocorticosterone to corticosterone in the presence of NADP(H). Participates in the corticosteroid receptor-mediated anti-inflammatory response, as well as metabolic and homeostatic processes. Plays a role in the secretion of aqueous humor in the eye, maintaining a normotensive, intraocular environment. Bidirectional in vitro, predominantly functions as a reductase in vivo, thereby increasing the concentration of active glucocorticoids. It has broad substrate specificity, besides glucocorticoids, it accepts other steroid and sterol substrates. Interconverts 7-oxo- and 7-hydroxy-neurosteroids such as 7-oxopregnenolone and 7beta-hydroxypregnenolone, 7-oxodehydroepiandrosterone (3beta-hydroxy-5-androstene-7,17-dione) and 7beta-hydroxydehydroepiandrosterone (3beta,7beta-dihydroxyandrost-5-en-17-one), among others. Catalyzes the stereo-specific conversion of the major dietary oxysterol, 7-ketocholesterol (7-oxocholesterol), into the more polar 7-beta-hydroxycholesterol metabolite. 7-oxocholesterol is one of the most important oxysterols, it participates in several events such as induction of apoptosis, accumulation in atherosclerotic lesions, lipid peroxidation, and induction of foam cell formation. Mediates the 7-oxo reduction of 7-oxolithocholate mainly to chenodeoxycholate, and to a lesser extent to ursodeoxycholate, both in its free form and when conjugated to glycine or taurine, providing a link between glucocorticoid activation and bile acid metabolism. Catalyzes the synthesis of 7-beta-25-dihydroxycholesterol from 7-oxo-25-hydroxycholesterol in vitro, which acts as a ligand for the G-protein-coupled receptor (GPCR) Epstein-Barr virus-induced gene 2 (EBI2) and may thereby regulate immune cell migration. This Ovis aries (Sheep) protein is 11-beta-hydroxysteroid dehydrogenase 1 (HSD11B1).